A 261-amino-acid chain; its full sequence is Undecaprenyl-diphosphatase (261 aa).

A run of 7 helical transmembrane segments spans residues 38–58, 75–95, 106–126, 136–156, 181–201, 217–237, and 241–261; these read RSDF…TFVF, RDYV…GLAV, IQPI…AESV, VTWS…VFPG, FSFL…CFEL, VAFV…LGYI, and SFAP…TWLT.

Belongs to the UppP family.

The protein resides in the cell inner membrane. The enzyme catalyses di-trans,octa-cis-undecaprenyl diphosphate + H2O = di-trans,octa-cis-undecaprenyl phosphate + phosphate + H(+). In terms of biological role, catalyzes the dephosphorylation of undecaprenyl diphosphate (UPP). Confers resistance to bacitracin. This is Undecaprenyl-diphosphatase from Xylella fastidiosa (strain 9a5c).